A 483-amino-acid chain; its full sequence is MEDPLLLGDNQIITGSLKPTPTWRMNFTAELKNLSRMALPMATVTVAQYLLPVISVMVAGHRSELQLSGVALATSFTNVSGFSVMFGLAGALETLCGQAYGAKQYAKIGTYTFSAIVSNVPIVVLISILWFYMDKLFVSLGQDPDISKVAGSYAVCLIPALLAQAVQQPLTRFLQTQGLVLPLLYCAITTLLFHIPVCLILVYAFGLGSNGAALAIGLSYWFNVLILALYVRFSSSCEKTRGFVSDDFVLSVKQFFQYGIPSAAMTTIEWSLFEFLILSSGLLPNPKLETSVLSICLTTSSLHYVIPMGIGAAGSIRVSNELGAGNPEVARLAVFAGIFLWFLEATICSTLLFICRDIFGYAFSNSKEVVDYVTELSPLLCISFLVDGFSAVLGGVARGSGWQHIGAWANVVAYYLLGAPVGLFLGFWCHMNGKGLWIGVVVGSTAQGIILAIVTACMSWNEQAAKARQRIVVRTSSFGNGLA.

The next 12 membrane-spanning stretches (helical) occupy residues 38-58, 69-89, 113-133, 146-166, 187-207, 211-231, 263-283, 292-312, 334-354, 376-396, 405-425, and 436-456; these read ALPM…SVMV, GVAL…FGLA, FSAI…WFYM, ISKV…AQAV, AITT…AFGL, GAAL…ALYV, AAMT…SGLL, VLSI…GIGA, VFAG…LLFI, LSPL…LGGV, IGAW…GLFL, and LWIG…IVTA.

Belongs to the multi antimicrobial extrusion (MATE) (TC 2.A.66.1) family.

It is found in the membrane. The polypeptide is Protein DETOXIFICATION 6 (Arabidopsis thaliana (Mouse-ear cress)).